The following is an 882-amino-acid chain: ABC transporter H family member 4 (882 aa).

3 consecutive transmembrane segments (helical) span residues W4–F24, L35–W55, and T79–L101. Residues F384 to G863 enclose the ABC transporter domain. An ATP-binding site is contributed by G418–S425. Disordered regions lie at residues F522–I617, S634–V669, and N710–S730. 2 stretches are compositionally biased toward low complexity: residues I528 to I617 and N647 to S667. Residues D715–A724 show a composition bias toward acidic residues.

Belongs to the ABC transporter superfamily. ABCH family.

Its subcellular location is the membrane. The chain is ABC transporter H family member 4 (abcH4) from Dictyostelium discoideum (Social amoeba).